Consider the following 259-residue polypeptide: Deoxyribose-phosphate aldolase (259 aa).

D102 (proton donor/acceptor) is an active-site residue. The active-site Schiff-base intermediate with acetaldehyde is the K167. K201 acts as the Proton donor/acceptor in catalysis.

This sequence belongs to the DeoC/FbaB aldolase family. DeoC type 2 subfamily.

Its subcellular location is the cytoplasm. It catalyses the reaction 2-deoxy-D-ribose 5-phosphate = D-glyceraldehyde 3-phosphate + acetaldehyde. The protein operates within carbohydrate degradation; 2-deoxy-D-ribose 1-phosphate degradation; D-glyceraldehyde 3-phosphate and acetaldehyde from 2-deoxy-alpha-D-ribose 1-phosphate: step 2/2. In terms of biological role, catalyzes a reversible aldol reaction between acetaldehyde and D-glyceraldehyde 3-phosphate to generate 2-deoxy-D-ribose 5-phosphate. This chain is Deoxyribose-phosphate aldolase, found in Escherichia coli O1:K1 / APEC.